A 169-amino-acid polypeptide reads, in one-letter code: NADH-quinone oxidoreductase subunit I (169 aa).

2 4Fe-4S ferredoxin-type domains span residues 61–90 and 100–129; these read RKYKNGEERCIACKLCEAICPAQAITIEAQ and VRYDIDMTKCIYCGFCQEACPVDAIVEGPN. Cys-70, Cys-73, Cys-76, Cys-80, Cys-109, Cys-112, Cys-115, and Cys-119 together coordinate [4Fe-4S] cluster.

Belongs to the complex I 23 kDa subunit family. NDH-1 is composed of 14 different subunits. Subunits NuoA, H, J, K, L, M, N constitute the membrane sector of the complex. [4Fe-4S] cluster is required as a cofactor.

The protein resides in the cell inner membrane. The enzyme catalyses a quinone + NADH + 5 H(+)(in) = a quinol + NAD(+) + 4 H(+)(out). In terms of biological role, NDH-1 shuttles electrons from NADH, via FMN and iron-sulfur (Fe-S) centers, to quinones in the respiratory chain. The immediate electron acceptor for the enzyme in this species is believed to be ubiquinone. Couples the redox reaction to proton translocation (for every two electrons transferred, four hydrogen ions are translocated across the cytoplasmic membrane), and thus conserves the redox energy in a proton gradient. This is NADH-quinone oxidoreductase subunit I from Ehrlichia chaffeensis (strain ATCC CRL-10679 / Arkansas).